A 126-amino-acid chain; its full sequence is Fluoride-specific ion channel FluC (126 aa).

Helical transmembrane passes span Gly5–Val25, Tyr36–Phe56, Leu69–Ile89, and Trp99–Ile119. Na(+)-binding residues include Gly76 and Thr79.

It belongs to the fluoride channel Fluc/FEX (TC 1.A.43) family.

The protein localises to the cell inner membrane. It carries out the reaction fluoride(in) = fluoride(out). With respect to regulation, na(+) is not transported, but it plays an essential structural role and its presence is essential for fluoride channel function. Fluoride-specific ion channel. Important for reducing fluoride concentration in the cell, thus reducing its toxicity. The sequence is that of Fluoride-specific ion channel FluC from Cupriavidus metallidurans (strain ATCC 43123 / DSM 2839 / NBRC 102507 / CH34) (Ralstonia metallidurans).